The chain runs to 38 residues: Photosystem I reaction center subunit IX (38 aa).

Residues 6-26 form a helical membrane-spanning segment; sequence YLSTAPVVATLWLFLTAGILI.

It belongs to the PsaJ family.

It localises to the plastid. The protein localises to the chloroplast thylakoid membrane. May help in the organization of the PsaE and PsaF subunits. The sequence is that of Photosystem I reaction center subunit IX from Cyanidioschyzon merolae (strain NIES-3377 / 10D) (Unicellular red alga).